Reading from the N-terminus, the 223-residue chain is DNA mismatch repair protein MutH (223 aa).

It belongs to the MutH family.

It is found in the cytoplasm. Functionally, sequence-specific endonuclease that cleaves unmethylated GATC sequences. It is involved in DNA mismatch repair. The chain is DNA mismatch repair protein MutH from Shewanella oneidensis (strain ATCC 700550 / JCM 31522 / CIP 106686 / LMG 19005 / NCIMB 14063 / MR-1).